Reading from the N-terminus, the 109-residue chain is Cell division protein ZapA (109 aa).

The stretch at Pro-21–Ile-100 forms a coiled coil.

It belongs to the ZapA family. Type 1 subfamily. In terms of assembly, homodimer. Interacts with FtsZ.

It localises to the cytoplasm. In terms of biological role, activator of cell division through the inhibition of FtsZ GTPase activity, therefore promoting FtsZ assembly into bundles of protofilaments necessary for the formation of the division Z ring. It is recruited early at mid-cell but it is not essential for cell division. In Shigella dysenteriae serotype 1 (strain Sd197), this protein is Cell division protein ZapA.